The primary structure comprises 145 residues: 3-dehydroquinate dehydratase (145 aa).

Catalysis depends on Y23, which acts as the Proton acceptor. Substrate is bound by residues N75, H81, and D88. The active-site Proton donor is the H101. Residues 102–103 (IS) and R112 each bind substrate.

This sequence belongs to the type-II 3-dehydroquinase family. In terms of assembly, homododecamer.

It catalyses the reaction 3-dehydroquinate = 3-dehydroshikimate + H2O. Its pathway is metabolic intermediate biosynthesis; chorismate biosynthesis; chorismate from D-erythrose 4-phosphate and phosphoenolpyruvate: step 3/7. Functionally, catalyzes a trans-dehydration via an enolate intermediate. This chain is 3-dehydroquinate dehydratase, found in Caldicellulosiruptor bescii (strain ATCC BAA-1888 / DSM 6725 / KCTC 15123 / Z-1320) (Anaerocellum thermophilum).